Reading from the N-terminus, the 255-residue chain is uncharacterized protein (255 aa).

The first 23 residues, 1–23, serve as a signal peptide directing secretion; it reads MKRLNKLVLYISFLILVISFTAG. A lipid anchor (N-palmitoyl cysteine) is attached at C24. C24 carries the S-diacylglycerol cysteine lipid modification.

The protein belongs to the staphylococcal tandem lipoprotein family.

The protein localises to the cell membrane. This is an uncharacterized protein from Staphylococcus aureus (strain N315).